Consider the following 108-residue polypeptide: Insulin-1 (108 aa).

The signal sequence occupies residues 1–24; the sequence is MALLVHFLPLLALLALWEPKPTQA. 3 disulfide bridges follow: cysteine 31/cysteine 94, cysteine 43/cysteine 107, and cysteine 93/cysteine 98. Positions 57 to 85 are cleaved as a propeptide — c peptide; it reads EVEDPQVEQLELGGSPGDLQTLALEVARQ.

The protein belongs to the insulin family. As to quaternary structure, heterodimer of a B chain and an A chain linked by two disulfide bonds.

It is found in the secreted. Functionally, insulin decreases blood glucose concentration. It increases cell permeability to monosaccharides, amino acids and fatty acids. It accelerates glycolysis, the pentose phosphate cycle, and glycogen synthesis in liver. The chain is Insulin-1 (Ins1) from Mus musculus (Mouse).